The chain runs to 572 residues: Cytochrome P450 monooxygenase xilC (572 aa).

C515 serves as a coordination point for heme.

Belongs to the cytochrome P450 family. Requires heme as cofactor.

It participates in secondary metabolite biosynthesis. In terms of biological role, cytochrome P450 monooxygenase; part of the gene cluster that mediates the biosynthesis of the 6-methyl-2-pyrone derivative xylariolide D. XilC hydroxylates the 5-alkyl-6-methyl-2-pyrone backbone called prexylariolide D, produced by the highly reducing polyketide synthase xilA, on its side chain to form xylariolide D. This is Cytochrome P450 monooxygenase xilC from Penicillium crustosum (Blue mold fungus).